We begin with the raw amino-acid sequence, 285 residues long: 4-diphosphocytidyl-2-C-methyl-D-erythritol kinase (285 aa).

K14 is a catalytic residue. 97–107 contacts ATP; it reads PMGGGIGGGSS. The active site involves D139.

This sequence belongs to the GHMP kinase family. IspE subfamily.

The enzyme catalyses 4-CDP-2-C-methyl-D-erythritol + ATP = 4-CDP-2-C-methyl-D-erythritol 2-phosphate + ADP + H(+). Its pathway is isoprenoid biosynthesis; isopentenyl diphosphate biosynthesis via DXP pathway; isopentenyl diphosphate from 1-deoxy-D-xylulose 5-phosphate: step 3/6. In terms of biological role, catalyzes the phosphorylation of the position 2 hydroxy group of 4-diphosphocytidyl-2C-methyl-D-erythritol. In Tolumonas auensis (strain DSM 9187 / NBRC 110442 / TA 4), this protein is 4-diphosphocytidyl-2-C-methyl-D-erythritol kinase.